The chain runs to 346 residues: Tyrosine--tRNA ligase (346 aa).

A 'HIGH' region motif is present at residues 47 to 56; the sequence is PSGRIHIAQA. A 'KMSKS' region motif is present at residues 230 to 234; it reads KMSKS. K233 is a binding site for ATP.

Belongs to the class-I aminoacyl-tRNA synthetase family. Homodimer.

The catalysed reaction is tRNA(Tyr) + L-tyrosine + ATP = L-tyrosyl-tRNA(Tyr) + AMP + diphosphate + H(+). Functionally, catalyzes the attachment of tyrosine to tRNA(Tyr) in a two-step reaction: tyrosine is first activated by ATP to form Tyr-AMP and then transferred to the acceptor end of tRNA(Tyr). In Acanthamoeba polyphaga (Amoeba), this protein is Tyrosine--tRNA ligase (YARS).